We begin with the raw amino-acid sequence, 617 residues long: DNA mismatch repair protein MutL (617 aa).

Positions 363–394 are disordered; the sequence is YAPAYGARPPQPSAWSVDTSPHRPLDDGQNRF. The segment covering 382–392 has biased composition (basic and acidic residues); the sequence is SPHRPLDDGQN.

It belongs to the DNA mismatch repair MutL/HexB family.

Its function is as follows. This protein is involved in the repair of mismatches in DNA. It is required for dam-dependent methyl-directed DNA mismatch repair. May act as a 'molecular matchmaker', a protein that promotes the formation of a stable complex between two or more DNA-binding proteins in an ATP-dependent manner without itself being part of a final effector complex. This is DNA mismatch repair protein MutL from Allorhizobium ampelinum (strain ATCC BAA-846 / DSM 112012 / S4) (Agrobacterium vitis (strain S4)).